The following is a 417-amino-acid chain: MIDPEILVNTPDIVRLSQKKRGESQSIVEDALIARRNLRIAINNFETLRAEQNVLSKKIAGSEDSDRPELMRVANLLAERVKNAREEQEKANSEWKKLLFEIPNIVSSEAPYGVEDKCAVMKTVGDIPEFDFEPADHLQLGEQLDAIDVSRGVKVSGTRFYFLKGWGARLELAVMNLALDLALKSGLTLLITPTLVKPEIMLGTGFLGRHEGEVYRLPSGYYLTGTSEVAIAGYHSDEILDISSGPIRYAGWSSCYRREAGSHGRDTRGIMRVHQFSKLEMFSYVHPQQSTRELEHIVSMQEKMLNLLEIPYRVSDIAAEELGTSASRKYDLEAWIPSQNTWREVTSASDCTTFQARRLNVRYRDESGRTGYVATLNGTLATTRFLVAILENHQTSNGSIRVPEALRPLLGQDVIER.

226 to 228 lines the L-serine pocket; sequence TSE. ATP is bound by residues 257-259 and Val-273; that span reads RRE. Glu-280 is an L-serine binding site. 344 to 347 is a binding site for ATP; it reads EVTS. An L-serine-binding site is contributed by Thr-379.

This sequence belongs to the class-II aminoacyl-tRNA synthetase family. Type-1 seryl-tRNA synthetase subfamily. In terms of assembly, homodimer. The tRNA molecule binds across the dimer.

The protein localises to the cytoplasm. It catalyses the reaction tRNA(Ser) + L-serine + ATP = L-seryl-tRNA(Ser) + AMP + diphosphate + H(+). The catalysed reaction is tRNA(Sec) + L-serine + ATP = L-seryl-tRNA(Sec) + AMP + diphosphate + H(+). Its pathway is aminoacyl-tRNA biosynthesis; selenocysteinyl-tRNA(Sec) biosynthesis; L-seryl-tRNA(Sec) from L-serine and tRNA(Sec): step 1/1. Its function is as follows. Catalyzes the attachment of serine to tRNA(Ser). Is also able to aminoacylate tRNA(Sec) with serine, to form the misacylated tRNA L-seryl-tRNA(Sec), which will be further converted into selenocysteinyl-tRNA(Sec). This Tropheryma whipplei (strain TW08/27) (Whipple's bacillus) protein is Serine--tRNA ligase.